The following is a 585-amino-acid chain: A-type ATP synthase subunit A (585 aa).

232-239 (GPFGSGKT) lines the ATP pocket.

Belongs to the ATPase alpha/beta chains family. As to quaternary structure, has multiple subunits with at least A(3), B(3), C, D, E, F, H, I and proteolipid K(x).

It is found in the cell membrane. The enzyme catalyses ATP + H2O + 4 H(+)(in) = ADP + phosphate + 5 H(+)(out). In terms of biological role, component of the A-type ATP synthase that produces ATP from ADP in the presence of a proton gradient across the membrane. The A chain is the catalytic subunit. This Methanosphaera stadtmanae (strain ATCC 43021 / DSM 3091 / JCM 11832 / MCB-3) protein is A-type ATP synthase subunit A.